Consider the following 34-residue polypeptide: Photosystem II reaction center protein M (34 aa).

A helical transmembrane segment spans residues 5-25 (ILAFIATALFISIPTAFLLIP).

Belongs to the PsbM family. As to quaternary structure, PSII is composed of 1 copy each of membrane proteins PsbA, PsbB, PsbC, PsbD, PsbE, PsbF, PsbH, PsbI, PsbJ, PsbK, PsbL, PsbM, PsbT, PsbX, PsbY, PsbZ, Psb30/Ycf12, at least 3 peripheral proteins of the oxygen-evolving complex and a large number of cofactors. It forms dimeric complexes.

The protein resides in the plastid. It localises to the chloroplast thylakoid membrane. One of the components of the core complex of photosystem II (PSII). PSII is a light-driven water:plastoquinone oxidoreductase that uses light energy to abstract electrons from H(2)O, generating O(2) and a proton gradient subsequently used for ATP formation. It consists of a core antenna complex that captures photons, and an electron transfer chain that converts photonic excitation into a charge separation. This subunit is found at the monomer-monomer interface. This chain is Photosystem II reaction center protein M, found in Psilotum nudum (Whisk fern).